The following is a 573-amino-acid chain: Proline--tRNA ligase (573 aa).

Belongs to the class-II aminoacyl-tRNA synthetase family. ProS type 1 subfamily. In terms of assembly, homodimer.

It localises to the cytoplasm. The enzyme catalyses tRNA(Pro) + L-proline + ATP = L-prolyl-tRNA(Pro) + AMP + diphosphate. In terms of biological role, catalyzes the attachment of proline to tRNA(Pro) in a two-step reaction: proline is first activated by ATP to form Pro-AMP and then transferred to the acceptor end of tRNA(Pro). As ProRS can inadvertently accommodate and process non-cognate amino acids such as alanine and cysteine, to avoid such errors it has two additional distinct editing activities against alanine. One activity is designated as 'pretransfer' editing and involves the tRNA(Pro)-independent hydrolysis of activated Ala-AMP. The other activity is designated 'posttransfer' editing and involves deacylation of mischarged Ala-tRNA(Pro). The misacylated Cys-tRNA(Pro) is not edited by ProRS. This Cupriavidus taiwanensis (strain DSM 17343 / BCRC 17206 / CCUG 44338 / CIP 107171 / LMG 19424 / R1) (Ralstonia taiwanensis (strain LMG 19424)) protein is Proline--tRNA ligase.